The chain runs to 939 residues: MATSQYFDFAQGGGPQYSAQPPTLPLPTVGASYTAQPTPGMDPAVNPAFPPAAPAGYGGYQPHSGQDFAYGSRPQEPVPTATTMATYQDSYSYGQSAAARSYEDRPYFQSAALQSGRMTAADSGQPGTQEACGQPSPHGSHSHAQPPQQAPIVESGQPASTLSSGYTYPTATGVQPESSASIVTSYPPPSYNPTCTAYTAPSYPNYDASVYSAASPFYPPAQPPPPPGPPQQLPPPPAPAGSGSSPRADSKPPLPSKLPRPKAGPRQLQLHYCDICKISCAGPQTYREHLGGQKHRKKEAAQKTGVQPNGSPRGVQAQLHCDLCAVSCTGADAYAAHIRGSKHQKVFKLHAKLGKPIPTLEPALATESPPGAEAKPTSPTGPSVCASSRPALAKRPVASKALCEGPPEPQAAGCRPQWGKPAQPKLEGPGAPTQGGSKEAPAGCSDAQPVGPEYVEEVFSDEGRVLRFHCKLCECSFNDLNAKDLHVRGRRHRLQYRKKVNPDLPIATEPSSRARKVLEERMRKQRHLAEERLEQLRRWHAERRRLEEEPPQDVPPHAPPDWAQPLLMGRPESPASAPLQPGRRPASSDDRHVMCKHATIYPTEQELLAVQRAVSHAERALKLVSDTLAEEDRGRREEEGDKRSSVAPQTRVLKGVMRVGILAKGLLLRGDRNVRLALLCSEKPTHSLLRRIAQQLPRQLQMVTEDEYEVSSDPEANIVISSCEEPRMQVTISVTSPLMREDPSTDPGVEEPQADAGDVLSPKKCLESLAALRHARWFQARASGLQPCVIVIRVLRDLCRRVPTWGALPAWAMELLVEKAVSSAAGPLGPGDAVRRVLECVATGTLLTDGPGLQDPCERDQTDALEPMTLQEREDVTASAQHALRMLAFRQTHKVLGMDLLPPRHRLGARFRKRQRGPGEGEEGAGEKKRGRRGGEGLV.

8 disordered regions span residues 1–72 (MATS…AYGS), 116–185 (GRMT…IVTS), 217–264 (FYPP…PKAG), 289–314 (HLGG…SPRG), 360–389 (LEPA…ASSR), 401–449 (ALCE…DAQP), 545–590 (RLEE…SSDD), and 906–939 (RLGA…EGLV). Polar residues-rich tracts occupy residues 137 to 147 (PHGSHSHAQPP) and 157 to 184 (QPAS…SIVT). Over residues 217 to 239 (FYPPAQPPPPPGPPQQLPPPPAP) the composition is skewed to pro residues. A coiled-coil region spans residues 516–549 (KVLEERMRKQRHLAEERLEQLRRWHAERRRLEEE). In terms of domain architecture, DZF spans 570 to 935 (RPESPASAPL…GEKKRGRRGG (366 aa)). Residues 906-916 (RLGARFRKRQR) show a composition bias toward basic residues.

The protein is Zinc finger RNA-binding protein 2 (ZFR2) of Homo sapiens (Human).